The sequence spans 410 residues: WD repeat and FYVE domain-containing protein 1 (410 aa).

WD repeat units follow at residues 22–61, 66–105, 112–150, 153–192, 197–236, and 240–279; these read GHQD…QYWP, TMAS…NKMN, AHQN…NMLG, FFSS…CSVI, GHEG…GRTL, and GHHD…EEAP. The segment at 281–352 adopts an FYVE-type zinc-finger fold; the sequence is WLESDSCQKC…VCDSCYDSIK (72 aa). Residues Cys287, Cys290, Cys314, Cys317, Cys322, Cys325, Cys344, and Cys347 each contribute to the Zn(2+) site. Residues 364-403 form a WD 7 repeat; the sequence is EGKHNISHMSMDVARGLMVTCGTDRVVKIWDMTPVVGCSL. Position 408 is a phosphoserine (Ser408).

As to quaternary structure, binds PtdIns3P in vitro with high specificity over other phosphoinositides. Interacts (via WD repeat 2) with tyrosine-phosphorylated TLR3 (via TIR domain) in response to poly(I:C). Interacts with TLR4 in response to LPS. Interacts with TICAM1 in response to poly(I:C).

Its subcellular location is the early endosome. In terms of biological role, positively regulates TLR3- and TLR4-mediated signaling pathways by bridging the interaction between TLR3 or TLR4 and TICAM1. Promotes TLR3/4 ligand-induced activation of transcription factors IRF3 and NF-kappa-B, as well as the production of IFN-beta and inflammatory cytokines. This Bos taurus (Bovine) protein is WD repeat and FYVE domain-containing protein 1 (WDFY1).